A 297-amino-acid chain; its full sequence is Nucleotide-binding protein DSY4845 (297 aa).

13-20 (GLSGAGKT) is an ATP binding site. Residue 64 to 67 (DLRG) coordinates GTP.

The protein belongs to the RapZ-like family.

Its function is as follows. Displays ATPase and GTPase activities. The chain is Nucleotide-binding protein DSY4845 from Desulfitobacterium hafniense (strain Y51).